The primary structure comprises 144 residues: Large ribosomal subunit protein uL13 (144 aa).

The protein belongs to the universal ribosomal protein uL13 family. As to quaternary structure, part of the 50S ribosomal subunit.

In terms of biological role, this protein is one of the early assembly proteins of the 50S ribosomal subunit, although it is not seen to bind rRNA by itself. It is important during the early stages of 50S assembly. The sequence is that of Large ribosomal subunit protein uL13 from Chloroflexus aurantiacus (strain ATCC 29366 / DSM 635 / J-10-fl).